We begin with the raw amino-acid sequence, 1154 residues long: DNA-directed RNA polymerase subunit beta (1154 aa).

Over residues 1108-1123 (ELGIDIQGEDRSERAG) the composition is skewed to basic and acidic residues. Positions 1108–1136 (ELGIDIQGEDRSERAGEPASPDEMDDEEE) are disordered. Residues 1127–1136 (SPDEMDDEEE) show a composition bias toward acidic residues.

It belongs to the RNA polymerase beta chain family. In terms of assembly, the RNAP catalytic core consists of 2 alpha, 1 beta, 1 beta' and 1 omega subunit. When a sigma factor is associated with the core the holoenzyme is formed, which can initiate transcription.

The enzyme catalyses RNA(n) + a ribonucleoside 5'-triphosphate = RNA(n+1) + diphosphate. Its function is as follows. DNA-dependent RNA polymerase catalyzes the transcription of DNA into RNA using the four ribonucleoside triphosphates as substrates. This Heliobacterium modesticaldum (strain ATCC 51547 / Ice1) protein is DNA-directed RNA polymerase subunit beta.